The sequence spans 357 residues: DNA integrity scanning protein DisA (357 aa).

The DAC domain maps to 3 to 141; sequence RPTLRETVAR…GGERHVVADS (139 aa). Residues glycine 70, leucine 88, and 101–105 each bind ATP; that span reads TRHRS.

It belongs to the DisA family. In terms of assembly, homooctamer. Mg(2+) is required as a cofactor.

It catalyses the reaction 2 ATP = 3',3'-c-di-AMP + 2 diphosphate. Participates in a DNA-damage check-point. DisA forms globular foci that rapidly scan along the chromosomes searching for lesions. In terms of biological role, also has diadenylate cyclase activity, catalyzing the condensation of 2 ATP molecules into cyclic di-AMP (c-di-AMP). c-di-AMP likely acts as a signaling molecule that may couple DNA integrity with a cellular process. In Mycobacterium avium (strain 104), this protein is DNA integrity scanning protein DisA.